The chain runs to 467 residues: tRNA dimethylallyltransferase (467 aa).

The transit peptide at Met1 to Leu47 directs the protein to the mitochondrion. Thr32–Ser37 contributes to the dimethylallyl diphosphate binding site. Interaction with substrate tRNA regions lie at residues Asp55–Gln58 and Arg183–Arg187. The segment at Phe221–His230 is core aggregation region. The tract at residues Gln233–Glu255 is interaction with isopentenylpyrophosphate transferase. Interaction with substrate tRNA stretches follow at residues Gln281–Ile283 and Ala313–Asn331. The Matrin-type zinc finger occupies His395–Lys425. Residues Asp432–Val467 are disordered. Residues Ser443 and Ser455 each carry the phosphoserine modification.

This sequence belongs to the IPP transferase family.

The protein localises to the mitochondrion. Its subcellular location is the cytoplasm. It localises to the nucleus. It carries out the reaction adenosine(37) in tRNA + dimethylallyl diphosphate = N(6)-dimethylallyladenosine(37) in tRNA + diphosphate. In terms of biological role, catalyzes the transfer of a dimethylallyl group onto the adenine at position 37 of both cytosolic and mitochondrial tRNAs, leading to the formation of N6-(dimethylallyl)adenosine (i6A37). Mediates modification of a limited subset of tRNAs: tRNA(Ser)(AGA), tRNA(Ser)(CGA), tRNA(Ser)(UGA), as well as partial modification of the selenocysteine tRNA(Ser)(UCA). TRIT1 is therefore required for selenoprotein expression. The sequence is that of tRNA dimethylallyltransferase (Trit1) from Mus musculus (Mouse).